A 179-amino-acid chain; its full sequence is ATP synthase subunit delta (179 aa).

This sequence belongs to the ATPase delta chain family. In terms of assembly, F-type ATPases have 2 components, F(1) - the catalytic core - and F(0) - the membrane proton channel. F(1) has five subunits: alpha(3), beta(3), gamma(1), delta(1), epsilon(1). F(0) has three main subunits: a(1), b(2) and c(10-14). The alpha and beta chains form an alternating ring which encloses part of the gamma chain. F(1) is attached to F(0) by a central stalk formed by the gamma and epsilon chains, while a peripheral stalk is formed by the delta and b chains.

The protein localises to the cell inner membrane. F(1)F(0) ATP synthase produces ATP from ADP in the presence of a proton or sodium gradient. F-type ATPases consist of two structural domains, F(1) containing the extramembraneous catalytic core and F(0) containing the membrane proton channel, linked together by a central stalk and a peripheral stalk. During catalysis, ATP synthesis in the catalytic domain of F(1) is coupled via a rotary mechanism of the central stalk subunits to proton translocation. Functionally, this protein is part of the stalk that links CF(0) to CF(1). It either transmits conformational changes from CF(0) to CF(1) or is implicated in proton conduction. This is ATP synthase subunit delta from Burkholderia mallei (strain NCTC 10247).